A 280-amino-acid chain; its full sequence is Dual adapter for phosphotyrosine and 3-phosphotyrosine and 3-phosphoinositide (280 aa).

An SH2 domain is found at 35–129 (WYHGNLTRHA…GTLMVLKHPY (95 aa)). Y139 is subject to Phosphotyrosine. S141 carries the phosphoserine modification. The PH domain maps to 164–259 (LGTKEGYLTK…WIKILRWKLS (96 aa)).

In terms of assembly, interacts with PtdIns(3,4,5)P3 and PLCG2. Post-translationally, phosphorylated on tyrosine residues.

It is found in the cytoplasm. The protein localises to the membrane. In terms of biological role, may act as a B-cell-associated adapter that regulates B-cell antigen receptor (BCR)-signaling downstream of PI3K. The polypeptide is Dual adapter for phosphotyrosine and 3-phosphotyrosine and 3-phosphoinositide (Dapp1) (Mus musculus (Mouse)).